Here is a 324-residue protein sequence, read N- to C-terminus: MPVCLLVSEDNSHKPIELHHQQSVTLGRGPDTKIKDKKCSREQVELRADCNRGFVTVKQLGVNPTLVDDVVVGKGNQVSIKPGQSLYMVNQQYPYSVKFTEDTSRSKPSKRAQQIQSPTKTTADVSDSPPPPKKTTPPAGEKSESAGHWSQGLKASMQDPKMQVYKDDSVVVIKDKYPKARYHWLVLPWQSISSLKALRSEHVELLKHMQRVADQMVEQCPDAHKLSFRLGYHAIPSMSHVHLHVISQDFDSPCLKNKKHWNSFTTDYFVESQDVISMLEHDGKVQVKEGAGELLKLPLRCHVCGKEQTTIPKLKDHLKTHLPS.

One can recognise an FHA-like domain in the interval 23 to 72; it reads SVTLGRGPDTKIKDKKCSREQVELRADCNRGFVTVKQLGVNPTLVDDVVV. Residues 100 to 160 form a disordered region; it reads TEDTSRSKPS…QGLKASMQDP (61 aa). The segment covering 111–125 has biased composition (polar residues); the sequence is RAQQIQSPTKTTADV. Positions 150 to 255 constitute an HIT domain; it reads SQGLKASMQD…ISQDFDSPCL (106 aa). Interaction with DNA substrate regions lie at residues 175 to 179 and 237 to 238; these read DKYPK and SM. The Histidine triad motif signature appears at 240–244; sequence HVHLH. The Tele-AMP-histidine intermediate role is filled by H242. A C2H2-type zinc finger spans residues 299–321; that stretch reads LRCHVCGKEQTTIPKLKDHLKTH.

It localises to the nucleus. It is found in the nucleoplasm. Its subcellular location is the nucleolus. It carries out the reaction a 5'-end adenosine-5'-diphospho-5'-2'-deoxyribonucleoside-DNA + H2O = a 5'-end 5'-phospho-2'-deoxyribonucleoside-DNA + AMP + 2 H(+). It catalyses the reaction a 5'-end adenosine-5'-diphospho-5'-ribonucleoside-2'-deoxyribonucleotide-DNA + H2O = a 5'-end 5'-phospho-ribonucleoside-2'-deoxyribonucleotide-DNA + AMP + 2 H(+). The catalysed reaction is a 3'-end 2'-deoxyribonucleotide-3'-diphospho-5'-guanosine-DNA + H2O = a 3'-end 2'-deoxyribonucleotide 3'-phosphate-DNA + GMP + 2 H(+). DNA-binding protein involved in single-strand DNA break repair, double-strand DNA break repair and base excision repair. Resolves abortive DNA ligation intermediates formed either at base excision sites, or when DNA ligases attempt to repair non-ligatable breaks induced by reactive oxygen species. Catalyzes the release of adenylate groups covalently linked to 5'-phosphate termini, resulting in the production of 5'-phosphate termini that can be efficiently rejoined. Also able to hydrolyze adenosine 5'-monophosphoramidate (AMP-NH(2)) and diadenosine tetraphosphate (AppppA), but with lower catalytic activity. Likewise, catalyzes the release of 3'-linked guanosine (DNAppG) and inosine (DNAppI) from DNA, but has higher specific activity with 5'-linked adenosine (AppDNA). This chain is Aprataxin (aptx), found in Danio rerio (Zebrafish).